The primary structure comprises 916 residues: Isoleucine--tRNA ligase (916 aa).

The 'HIGH' region signature appears at 57 to 67 (PYANGNLHMGH). Glu-554 contributes to the L-isoleucyl-5'-AMP binding site. Residues 595–599 (KMSKS) carry the 'KMSKS' region motif. Lys-598 provides a ligand contact to ATP. Zn(2+) contacts are provided by Cys-885, Cys-888, Cys-905, and Cys-908.

This sequence belongs to the class-I aminoacyl-tRNA synthetase family. IleS type 1 subfamily. As to quaternary structure, monomer. Requires Zn(2+) as cofactor.

The protein resides in the cytoplasm. The catalysed reaction is tRNA(Ile) + L-isoleucine + ATP = L-isoleucyl-tRNA(Ile) + AMP + diphosphate. In terms of biological role, catalyzes the attachment of isoleucine to tRNA(Ile). As IleRS can inadvertently accommodate and process structurally similar amino acids such as valine, to avoid such errors it has two additional distinct tRNA(Ile)-dependent editing activities. One activity is designated as 'pretransfer' editing and involves the hydrolysis of activated Val-AMP. The other activity is designated 'posttransfer' editing and involves deacylation of mischarged Val-tRNA(Ile). The polypeptide is Isoleucine--tRNA ligase (Staphylococcus saprophyticus subsp. saprophyticus (strain ATCC 15305 / DSM 20229 / NCIMB 8711 / NCTC 7292 / S-41)).